A 184-amino-acid polypeptide reads, in one-letter code: Photosystem I assembly protein Ycf4 (184 aa).

2 helical membrane passes run 21–43 (NFCWAFILFLGSLGFLLVGISSY) and 58–80 (LFFPQGIVMSFYGIAGLFISSYL).

Belongs to the Ycf4 family.

The protein resides in the plastid. It is found in the chloroplast thylakoid membrane. In terms of biological role, seems to be required for the assembly of the photosystem I complex. The protein is Photosystem I assembly protein Ycf4 of Carpobrotus chilensis (Sea fig).